The chain runs to 98 residues: Cystatin-B (98 aa).

Methionine 1 is subject to N-acetylmethionine. Positions 46-50 match the Secondary area of contact motif; sequence QVVAG.

It belongs to the cystatin family. Able to form dimers stabilized by noncovalent forces.

It localises to the cytoplasm. Its subcellular location is the nucleus. This is an intracellular thiol proteinase inhibitor. Tightly binding reversible inhibitor of cathepsins L, H and B. The protein is Cystatin-B (CSTB) of Pongo pygmaeus (Bornean orangutan).